Consider the following 119-residue polypeptide: Large ribosomal subunit protein uL18 (119 aa).

It belongs to the universal ribosomal protein uL18 family. As to quaternary structure, part of the 50S ribosomal subunit; part of the 5S rRNA/L5/L18/L25 subcomplex. Contacts the 5S and 23S rRNAs.

In terms of biological role, this is one of the proteins that bind and probably mediate the attachment of the 5S RNA into the large ribosomal subunit, where it forms part of the central protuberance. The polypeptide is Large ribosomal subunit protein uL18 (Anaeromyxobacter dehalogenans (strain 2CP-1 / ATCC BAA-258)).